Reading from the N-terminus, the 567-residue chain is Urease subunit alpha 1 (567 aa).

The Urease domain occupies Gly-128–Phe-567. Ni(2+) contacts are provided by His-133, His-135, and Lys-216. Lys-216 bears the N6-carboxylysine mark. His-218 contacts substrate. Ni(2+) is bound by residues His-245 and His-271. The Proton donor role is filled by His-319. Position 359 (Asp-359) interacts with Ni(2+).

It belongs to the metallo-dependent hydrolases superfamily. Urease alpha subunit family. Heterotrimer of UreA (gamma), UreB (beta) and UreC (alpha) subunits. Three heterotrimers associate to form the active enzyme. Ni cation is required as a cofactor. Post-translationally, carboxylation allows a single lysine to coordinate two nickel ions.

The protein localises to the cytoplasm. The enzyme catalyses urea + 2 H2O + H(+) = hydrogencarbonate + 2 NH4(+). It participates in nitrogen metabolism; urea degradation; CO(2) and NH(3) from urea (urease route): step 1/1. The sequence is that of Urease subunit alpha 1 from Psychrobacter cryohalolentis (strain ATCC BAA-1226 / DSM 17306 / VKM B-2378 / K5).